The sequence spans 110 residues: uncharacterized protein (110 aa).

May play a regulatory role in sulfomenaquinone (SMK) biosynthesis. This is an uncharacterized protein from Mycobacterium bovis (strain ATCC BAA-935 / AF2122/97).